The sequence spans 34 residues: Cycloamanide E proprotein (34 aa).

Residues 1 to 10 (MSDINAARLP) constitute a propeptide that is removed on maturation. Residues 11–17 (SFFFPVP) constitute a cross-link (cyclopeptide (Ser-Pro)). The propeptide occupies 18–34 (CISDDIEMVLTRGESLC).

The protein belongs to the MSDIN fungal toxin family. Processed by the macrocyclase-peptidase enzyme POPB to yield a cyclic decapeptide. POPB first removes 10 residues from the N-terminus. Conformational trapping of the remaining peptide forces the enzyme to release this intermediate rather than proceed to macrocyclization. The enzyme rebinds the remaining peptide in a different conformation and catalyzes macrocyclization of the N-terminal 7 residues.

Functionally, cyclic heptapeptide that belongs to the MSDIN-like toxin family responsible for a large number of food poisoning cases and deaths. Cycloaminide E is structurally related to other cycloamanides that are non-toxic to mammals but show immunosuppressive activity. The sequence is that of Cycloamanide E proprotein from Amanita phalloides (Death cap).